The chain runs to 68 residues: Movement protein TGBp3 (68 aa).

Over 1 to 6 (MFSGKE) the chain is Lumenal. Residues 7–26 (ITLFALSTLIALIVLNYMSA) traverse the membrane as a helical segment. The Cytoplasmic portion of the chain corresponds to 27–68 (TPNPVCLIELTGHSAVLRGNNCESLTSGVIEALSAHLHGLRN).

This sequence belongs to the Tymovirales TGBp3 protein family.

Its subcellular location is the host endoplasmic reticulum membrane. Its function is as follows. Plays a role in viral cell-to-cell propagation, by facilitating genome transport to neighboring plant cells through plasmosdesmata. May induce the formation of granular vesicles derived from the Endoplasmic reticulum, which align on actin filaments. The protein is Movement protein TGBp3 of Papaya mosaic potexvirus (PMV).